The sequence spans 512 residues: Probable cytosol aminopeptidase (512 aa).

Mn(2+)-binding residues include lysine 281 and aspartate 286. Residue lysine 293 is part of the active site. Positions 304, 363, and 365 each coordinate Mn(2+). Residue arginine 367 is part of the active site.

This sequence belongs to the peptidase M17 family. Mn(2+) serves as cofactor.

Its subcellular location is the cytoplasm. It carries out the reaction Release of an N-terminal amino acid, Xaa-|-Yaa-, in which Xaa is preferably Leu, but may be other amino acids including Pro although not Arg or Lys, and Yaa may be Pro. Amino acid amides and methyl esters are also readily hydrolyzed, but rates on arylamides are exceedingly low.. The enzyme catalyses Release of an N-terminal amino acid, preferentially leucine, but not glutamic or aspartic acids.. Its function is as follows. Presumably involved in the processing and regular turnover of intracellular proteins. Catalyzes the removal of unsubstituted N-terminal amino acids from various peptides. The polypeptide is Probable cytosol aminopeptidase (Koribacter versatilis (strain Ellin345)).